The primary structure comprises 201 residues: Protein GrpE (201 aa).

It belongs to the GrpE family. Homodimer.

It is found in the cytoplasm. Functionally, participates actively in the response to hyperosmotic and heat shock by preventing the aggregation of stress-denatured proteins, in association with DnaK and GrpE. It is the nucleotide exchange factor for DnaK and may function as a thermosensor. Unfolded proteins bind initially to DnaJ; upon interaction with the DnaJ-bound protein, DnaK hydrolyzes its bound ATP, resulting in the formation of a stable complex. GrpE releases ADP from DnaK; ATP binding to DnaK triggers the release of the substrate protein, thus completing the reaction cycle. Several rounds of ATP-dependent interactions between DnaJ, DnaK and GrpE are required for fully efficient folding. In Shewanella denitrificans (strain OS217 / ATCC BAA-1090 / DSM 15013), this protein is Protein GrpE.